The sequence spans 574 residues: Phosphatidylinositol 4-kinase gamma 3 (574 aa).

Ubiquitin-like domains are found at residues 32–109 (PILV…SDLQ) and 110–188 (AISV…AKVR). The PI3K/PI4K catalytic domain occupies 257 to 555 (GNGPIRSSDG…IVPTETTEDE (299 aa)). A G-loop region spans residues 263-269 (SSDGSGG). Residues 264–270 (SDGSGGA), Lys286, and 381–384 (QMFV) contribute to the ATP site. Residues 414 to 422 (ANADRHAGN) are catalytic loop. The tract at residues 438–464 (PIDHGYCFPNKFEDCTFEWLYWPQAKE) is activation loop. An ATP-binding site is contributed by Asp440.

It belongs to the PI3/PI4-kinase family. Type II PI4K subfamily.

The enzyme catalyses a 1,2-diacyl-sn-glycero-3-phospho-(1D-myo-inositol) + ATP = a 1,2-diacyl-sn-glycero-3-phospho-(1D-myo-inositol 4-phosphate) + ADP + H(+). In terms of biological role, the phosphorylation of phosphatidylinositol (PI) to PI4P is the first committed step in the generation of phosphatidylinositol 4,5-bisphosphate (PIP2), a precursor of the second messenger inositol 1,4,5-trisphosphate (InsP3). The polypeptide is Phosphatidylinositol 4-kinase gamma 3 (PI4KG3) (Arabidopsis thaliana (Mouse-ear cress)).